A 288-amino-acid polypeptide reads, in one-letter code: Small ribosomal subunit protein uS2 (288 aa).

It belongs to the universal ribosomal protein uS2 family. As to quaternary structure, component of the small ribosomal subunit. Mature ribosomes consist of a small (40S) and a large (60S) subunit. The 40S subunit contains about 33 different proteins and 1 molecule of RNA (18S). The 60S subunit contains about 49 different proteins and 3 molecules of RNA (28S, 5.8S and 5S). Interacts with ribosomal protein S21.

The protein localises to the cytoplasm. Its function is as follows. Required for the assembly and/or stability of the 40S ribosomal subunit. Required for the processing of the 20S rRNA-precursor to mature 18S rRNA in a late step of the maturation of 40S ribosomal subunits. This Aedes aegypti (Yellowfever mosquito) protein is Small ribosomal subunit protein uS2.